Here is a 309-residue protein sequence, read N- to C-terminus: tRNA uridine(34) hydroxylase (309 aa).

The 95-residue stretch at 130 to 224 (SDPDTIVIDT…YLEEVPQEES (95 aa)) folds into the Rhodanese domain. Catalysis depends on C184, which acts as the Cysteine persulfide intermediate.

It belongs to the TrhO family.

The catalysed reaction is uridine(34) in tRNA + AH2 + O2 = 5-hydroxyuridine(34) in tRNA + A + H2O. Its function is as follows. Catalyzes oxygen-dependent 5-hydroxyuridine (ho5U) modification at position 34 in tRNAs. This Rhizobium johnstonii (strain DSM 114642 / LMG 32736 / 3841) (Rhizobium leguminosarum bv. viciae) protein is tRNA uridine(34) hydroxylase.